The sequence spans 444 residues: Trigger factor (444 aa).

The region spanning 161 to 246 (GDRVVIDFKG…VQKVEGQKLP (86 aa)) is the PPIase FKBP-type domain.

This sequence belongs to the FKBP-type PPIase family. Tig subfamily.

It is found in the cytoplasm. It carries out the reaction [protein]-peptidylproline (omega=180) = [protein]-peptidylproline (omega=0). Its function is as follows. Involved in protein export. Acts as a chaperone by maintaining the newly synthesized protein in an open conformation. Functions as a peptidyl-prolyl cis-trans isomerase. This Saccharophagus degradans (strain 2-40 / ATCC 43961 / DSM 17024) protein is Trigger factor.